A 549-amino-acid polypeptide reads, in one-letter code: Fas-activated serine/threonine kinase (549 aa).

A disordered region spans residues 1–30 (MRRPRGEPGPRAPRPTEGATCAGPGESWSP). The 59-residue stretch at 477 to 535 (VVLVLRERWHFCRDGRVLLGSRALRERHLGLMGYQLLPLPFEELESQRGLPQLKSYLRQ) folds into the RAP domain.

This sequence belongs to the FAST protein kinase family. In terms of assembly, interacts with TIA1; the interactions leads to TIA1 phosphorylation. Interacts with TIAR. Autophosphorylated on serine/threonine residues. Activated by dephosphorylation. As to expression, expressed in heart, brain, placenta, lung, liver, skeletal muscle, kidney and pancreas.

It is found in the mitochondrion matrix. It catalyses the reaction L-seryl-[Fas-activated protein] + ATP = O-phospho-L-seryl-[Fas-activated protein] + ADP + H(+). It carries out the reaction L-threonyl-[Fas-activated protein] + ATP = O-phospho-L-threonyl-[Fas-activated protein] + ADP + H(+). The enzyme catalyses L-seryl-[protein] + ATP = O-phospho-L-seryl-[protein] + ADP + H(+). The catalysed reaction is L-threonyl-[protein] + ATP = O-phospho-L-threonyl-[protein] + ADP + H(+). Phosphorylates the splicing regulator TIA1, thereby promoting the inclusion of FAS exon 6, which leads to an mRNA encoding a pro-apoptotic form of the receptor. In terms of biological role, required for the biogenesis of some mitochondrial-encoded mRNAs, specifically stabilizes ND6 (NADH dehydrogenase complex subunit 6) mRNA, and regulates its levels. This chain is Fas-activated serine/threonine kinase (FASTK), found in Homo sapiens (Human).